The primary structure comprises 335 residues: Tetraacyldisaccharide 4'-kinase (335 aa).

58–65 (TVGGVGKT) contacts ATP.

It belongs to the LpxK family.

The enzyme catalyses a lipid A disaccharide + ATP = a lipid IVA + ADP + H(+). The protein operates within glycolipid biosynthesis; lipid IV(A) biosynthesis; lipid IV(A) from (3R)-3-hydroxytetradecanoyl-[acyl-carrier-protein] and UDP-N-acetyl-alpha-D-glucosamine: step 6/6. Functionally, transfers the gamma-phosphate of ATP to the 4'-position of a tetraacyldisaccharide 1-phosphate intermediate (termed DS-1-P) to form tetraacyldisaccharide 1,4'-bis-phosphate (lipid IVA). This is Tetraacyldisaccharide 4'-kinase from Caulobacter sp. (strain K31).